Reading from the N-terminus, the 549-residue chain is MKNINPTQTSAWQALQKHFDEMKDVTISELFAKDSDRFSKFSATFDDLMLVDFSKNRITEETLAKLQDLAKETDLAGAIKSMFSGEKINRTEDRAVLHVALRNRSNTPIVVDGKDVMPEVNAVLEKMKTFSEAIISGSWKGYTGKPITDVVNIGIGGSDLGPFMVTEALRPYKNHLNMHFVSNVDGTHIAEVLKNVNPETTLFLVASKTFTTQETMTNAHSARDWFLATAGDDKHVAKHFAALSTNAKAVGEFGIDTANMFEFWDWVGGRYSLWSAIGLSIILSVGFDNFVELLSGAHAMDKHFSTTPAEKNLPVLLALIGIWYNNFFGAETEAILPYDQYMHRFAAYFQQGNMESNGKYVDRNGHAVDYQTGPIIWGEPGTNGQHAFYQLIHQGTKMVPCDFIAPAITHNPLSDHHPKLLSNFFAQTEALAFGKSREVVEQEYRDQGKDPATLEHVVPFKVFEGNRPTNSILLREITPFSLGALIALYEHKIFTQGAILNIFTFDQWGVELGKQLANRILPELKDGSEVSSHDSSTNGLINRYKAWRA.

Residue E355 is the Proton donor of the active site. Catalysis depends on residues H386 and K514.

This sequence belongs to the GPI family.

The protein localises to the cytoplasm. It carries out the reaction alpha-D-glucose 6-phosphate = beta-D-fructose 6-phosphate. It participates in carbohydrate biosynthesis; gluconeogenesis. Its pathway is carbohydrate degradation; glycolysis; D-glyceraldehyde 3-phosphate and glycerone phosphate from D-glucose: step 2/4. Functionally, catalyzes the reversible isomerization of glucose-6-phosphate to fructose-6-phosphate. This is Glucose-6-phosphate isomerase from Klebsiella pneumoniae (strain 342).